A 245-amino-acid chain; its full sequence is Outer membrane protein assembly factor BamD (245 aa).

A signal peptide spans 1 to 19 (MTRMKYLVAAATLSLFLAG). Cys20 carries the N-palmitoyl cysteine lipid modification. A lipid anchor (S-diacylglycerol cysteine) is attached at Cys20.

This sequence belongs to the BamD family. As to quaternary structure, part of the Bam complex, which is composed of the outer membrane protein BamA, and four lipoproteins BamB, BamC, BamD and BamE.

The protein resides in the cell outer membrane. In terms of biological role, part of the outer membrane protein assembly complex, which is involved in assembly and insertion of beta-barrel proteins into the outer membrane. Constitutes, with BamA, the core component of the assembly machinery. In Escherichia coli O157:H7, this protein is Outer membrane protein assembly factor BamD.